A 397-amino-acid polypeptide reads, in one-letter code: HTH-type transcriptional regulator GalR (397 aa).

2 HTH lysR-type domains span residues 7–64 (PNLM…MRLT) and 99–156 (FQAR…LQPT). DNA-binding regions (H-T-H motif) lie at residues 24 to 43 (VSRATEVLFRAQSVVTRAIA) and 116 to 135 (MQTVARHFGLSQPAVSAALK).

The protein belongs to the LysR transcriptional regulatory family.

Functionally, transcriptional regulator for the galBCD and galTAP operons, encoding genes of the gallate degradation pathway. The sequence is that of HTH-type transcriptional regulator GalR (galR) from Pseudomonas putida (strain ATCC 47054 / DSM 6125 / CFBP 8728 / NCIMB 11950 / KT2440).